The chain runs to 944 residues: Tyrosine-protein kinase transmembrane receptor ROR2 (944 aa).

Positions 1-33 (MARGWVRPSRVPLCARAVWTAAALLLWTPWTAG) are cleaved as a signal peptide. At 34–403 (EVEDSEAIDT…CSPRDGSKMG (370 aa)) the chain is on the extracellular side. Residues 55-145 (PTLKGYFLNF…VATNGLKTIT (91 aa)) enclose the Ig-like C2-type domain. N-linked (GlcNAc...) asparagine glycosylation occurs at N70. Cystine bridges form between C83/C135, C174/C239, C182/C232, C223/C264, C252/C300, C256/C286, C316/C394, C337/C377, and C365/C389. One can recognise an FZ domain in the interval 169-303 (QEDGFCQPYR…SPDAANCMRI (135 aa)). N-linked (GlcNAc...) asparagine glycosylation is present at N188. A Kringle domain is found at 316–394 (CYNGSGADYR…RVELCDVPPC (79 aa)). The N-linked (GlcNAc...) asparagine glycan is linked to N318. A helical membrane pass occupies residues 404–424 (ILYILVPSIAIPLVIACLFFL). Over 425 to 944 (VCMCRNKQKA…TEAAHVQLEA (520 aa)) the chain is Cytoplasmic. The Protein kinase domain occupies 473–746 (VRFMEELGED…PRFKDIHSRL (274 aa)). ATP is bound by residues 479–487 (LGEDRFGKV) and K507. D615 serves as the catalytic Proton acceptor. Residue Y646 is modified to Phosphotyrosine; by autocatalysis. The interval 757 to 779 (SSAQTSGASNTTQTSSLSTSPVS) is disordered. The segment covering 765–779 (SNTTQTSSLSTSPVS) has biased composition (low complexity). R785 carries the post-translational modification Asymmetric dimethylarginine. Disordered stretches follow at residues 850–879 (QVPPQMVPKPSSHHSGSGSTSTGYVTTAPS) and 898–929 (QNIAEDVAQSPVQEAEEEEEGSVPETELLGDN). Low complexity predominate over residues 857-872 (PKPSSHHSGSGSTSTG).

Belongs to the protein kinase superfamily. Tyr protein kinase family. ROR subfamily. In terms of assembly, homodimer; promotes osteogenesis. Binds YWHAB. Interacts with WTIP. Interacts with ROR2. Mg(2+) is required as a cofactor.

It is found in the cell membrane. It catalyses the reaction L-tyrosyl-[protein] + ATP = O-phospho-L-tyrosyl-[protein] + ADP + H(+). In terms of biological role, tyrosine-protein kinase receptor which may be involved in the early formation of the chondrocytes. It seems to be required for cartilage and growth plate development. Phosphorylates YWHAB, leading to induction of osteogenesis and bone formation. In contrast, has also been shown to have very little tyrosine kinase activity in vitro. May act as a receptor for wnt ligand WNT5A which may result in the inhibition of WNT3A-mediated signaling. In Mus musculus (Mouse), this protein is Tyrosine-protein kinase transmembrane receptor ROR2 (Ror2).